Reading from the N-terminus, the 213-residue chain is Small ribosomal subunit protein uS5 (213 aa).

The 64-residue stretch at 49 to 112 folds into the S5 DRBM domain; it reads LEEEVMDVNL…DNAKYNLIKV (64 aa).

The protein belongs to the universal ribosomal protein uS5 family. As to quaternary structure, part of the 30S ribosomal subunit. Contacts protein S4.

With S4 and S12 plays an important role in translational accuracy. The polypeptide is Small ribosomal subunit protein uS5 (Methanobrevibacter smithii (strain ATCC 35061 / DSM 861 / OCM 144 / PS)).